A 314-amino-acid chain; its full sequence is tRNA-cytidine(32) 2-sulfurtransferase (314 aa).

The PP-loop motif motif lies at 57–62; sequence SGGKDS. 3 residues coordinate [4Fe-4S] cluster: Cys132, Cys135, and Cys223.

The protein belongs to the TtcA family. In terms of assembly, homodimer. Mg(2+) serves as cofactor. It depends on [4Fe-4S] cluster as a cofactor.

The protein resides in the cytoplasm. It catalyses the reaction cytidine(32) in tRNA + S-sulfanyl-L-cysteinyl-[cysteine desulfurase] + AH2 + ATP = 2-thiocytidine(32) in tRNA + L-cysteinyl-[cysteine desulfurase] + A + AMP + diphosphate + H(+). It participates in tRNA modification. In terms of biological role, catalyzes the ATP-dependent 2-thiolation of cytidine in position 32 of tRNA, to form 2-thiocytidine (s(2)C32). The sulfur atoms are provided by the cysteine/cysteine desulfurase (IscS) system. The chain is tRNA-cytidine(32) 2-sulfurtransferase from Alkalilimnicola ehrlichii (strain ATCC BAA-1101 / DSM 17681 / MLHE-1).